A 426-amino-acid polypeptide reads, in one-letter code: Gamma-glutamyl phosphate reductase (426 aa).

It belongs to the gamma-glutamyl phosphate reductase family.

It is found in the cytoplasm. It catalyses the reaction L-glutamate 5-semialdehyde + phosphate + NADP(+) = L-glutamyl 5-phosphate + NADPH + H(+). It participates in amino-acid biosynthesis; L-proline biosynthesis; L-glutamate 5-semialdehyde from L-glutamate: step 2/2. Catalyzes the NADPH-dependent reduction of L-glutamate 5-phosphate into L-glutamate 5-semialdehyde and phosphate. The product spontaneously undergoes cyclization to form 1-pyrroline-5-carboxylate. This chain is Gamma-glutamyl phosphate reductase, found in Deinococcus geothermalis (strain DSM 11300 / CIP 105573 / AG-3a).